The chain runs to 331 residues: GTP-binding protein RHO5 (331 aa).

Residue 10 to 17 coordinates GTP; it reads GDGAVGKT. The segment at 51–76 is disordered; that stretch reads ASSPLELDNGNDKRGSLSSASSSPST. The span at 66–75 shows a compositional bias: low complexity; that stretch reads SLSSASSSPS. GTP contacts are provided by residues 87–91 and 156–159; these read DTAGQ and TKSD. A phosphoserine mark is found at serine 223 and serine 228. Phosphothreonine is present on residues threonine 232 and threonine 244. Residues 239–331 are disordered; it reads TATTNTNGDK…KKKKSKCVIL (93 aa). Positions 258-273 are enriched in polar residues; sequence HHNNSTDSTLPKGSLQ. A Glycyl lysine isopeptide (Lys-Gly) (interchain with G-Cter in ubiquitin) cross-link involves residue lysine 276. The span at 287 to 297 shows a compositional bias: basic and acidic residues; sequence GQKDKIHEQSK. Residues 308–331 show a composition bias toward basic residues; the sequence is HHNKQAKPKTRNDKKKKKSKCVIL. At cysteine 328 the chain carries Cysteine methyl ester. Residue cysteine 328 is the site of S-geranylgeranyl cysteine attachment. A propeptide spans 329–331 (removed in mature form); the sequence is VIL.

It belongs to the small GTPase superfamily. Rho family. In terms of assembly, interacts with RGD2.

Its subcellular location is the membrane. The protein resides in the mitochondrion. Functionally, small GTPase that negatively regulates a MAP kinase branch, downstream of SLT2, of the PKC1-mediated signal transduction pathway. With its specific guanine nucleotide exchange factor (GEF), the heterodimeric complex DCK1/LMO1, relocates to mitochondria upon oxidative stress and triggers cell death. The DCK1/LMO1/RHO5 signaling module that mediates mitochondrial turnover under nitrogen starvation conditions via mitophagy. The DCK1/LMO1/RHO5 signaling module also plays a role in cell wall integrity signaling. This Saccharomyces cerevisiae (strain ATCC 204508 / S288c) (Baker's yeast) protein is GTP-binding protein RHO5.